Reading from the N-terminus, the 313-residue chain is Homoserine O-acetyltransferase (313 aa).

The active-site Acyl-thioester intermediate is Cys142. Residues Lys163 and Ser191 each coordinate substrate. His234 acts as the Proton acceptor in catalysis. The active site involves Glu236. Residue Arg248 coordinates substrate.

The protein belongs to the MetA family.

It localises to the cytoplasm. It catalyses the reaction L-homoserine + acetyl-CoA = O-acetyl-L-homoserine + CoA. Its pathway is amino-acid biosynthesis; L-methionine biosynthesis via de novo pathway; O-acetyl-L-homoserine from L-homoserine: step 1/1. Its function is as follows. Transfers an acetyl group from acetyl-CoA to L-homoserine, forming acetyl-L-homoserine. This is Homoserine O-acetyltransferase from Streptococcus sanguinis (strain SK36).